A 331-amino-acid chain; its full sequence is Phosphoribosylformylglycinamidine cyclo-ligase (331 aa).

The protein belongs to the AIR synthase family.

It localises to the cytoplasm. The enzyme catalyses 2-formamido-N(1)-(5-O-phospho-beta-D-ribosyl)acetamidine + ATP = 5-amino-1-(5-phospho-beta-D-ribosyl)imidazole + ADP + phosphate + H(+). It participates in purine metabolism; IMP biosynthesis via de novo pathway; 5-amino-1-(5-phospho-D-ribosyl)imidazole from N(2)-formyl-N(1)-(5-phospho-D-ribosyl)glycinamide: step 2/2. This Clostridium tetani (strain Massachusetts / E88) protein is Phosphoribosylformylglycinamidine cyclo-ligase.